A 79-amino-acid polypeptide reads, in one-letter code: MAEAPARRPFFRRRKTCPFSGPNAPKIDYKDSKLLMRYVSERGKIVPSRITAVSAKKQRELARAIKRARFLGLLPYVIR.

The protein belongs to the bacterial ribosomal protein bS18 family. Part of the 30S ribosomal subunit. Forms a tight heterodimer with protein bS6.

Functionally, binds as a heterodimer with protein bS6 to the central domain of the 16S rRNA, where it helps stabilize the platform of the 30S subunit. In Bradyrhizobium sp. (strain BTAi1 / ATCC BAA-1182), this protein is Small ribosomal subunit protein bS18.